A 276-amino-acid polypeptide reads, in one-letter code: Non-homologous end joining protein Ku (276 aa).

The region spanning 11 to 177 is the Ku domain; it reads ISFGLVHIPI…PEEIRSMEPL (167 aa). Residues 256-276 are disordered; sequence QVKTQQKKEAAPKKERRRKTS.

Belongs to the prokaryotic Ku family. As to quaternary structure, homodimer. Interacts with LigD.

Functionally, with LigD forms a non-homologous end joining (NHEJ) DNA repair enzyme, which repairs dsDNA breaks with reduced fidelity. Binds linear dsDNA with 5'- and 3'- overhangs but not closed circular dsDNA nor ssDNA. Recruits and stimulates the ligase activity of LigD. The chain is Non-homologous end joining protein Ku from Heliobacterium modesticaldum (strain ATCC 51547 / Ice1).